We begin with the raw amino-acid sequence, 128 residues long: Fluoride-specific ion channel FluC (128 aa).

4 helical membrane passes run 4–24 (VFLL…VSTW), 35–55 (FGIL…WSIA), 67–87 (FLFT…LDTM), and 99–119 (LLNV…GIIL). Residues G74 and T77 each contribute to the Na(+) site.

It belongs to the fluoride channel Fluc/FEX (TC 1.A.43) family.

The protein resides in the cell inner membrane. It catalyses the reaction fluoride(in) = fluoride(out). With respect to regulation, na(+) is not transported, but it plays an essential structural role and its presence is essential for fluoride channel function. Functionally, fluoride-specific ion channel. Important for reducing fluoride concentration in the cell, thus reducing its toxicity. This chain is Fluoride-specific ion channel FluC, found in Parabacteroides distasonis (strain ATCC 8503 / DSM 20701 / CIP 104284 / JCM 5825 / NCTC 11152).